The primary structure comprises 473 residues: Fumarate hydratase class II (473 aa).

Substrate-binding positions include 105–107 (SGT), 130–133 (HPND), 140–142 (SSN), and Thr188. The active-site Proton donor/acceptor is the His189. Residue Ser319 is part of the active site. Residues Ser320 and 325-327 (KVN) contribute to the substrate site.

Belongs to the class-II fumarase/aspartase family. Fumarase subfamily. Homotetramer.

Its subcellular location is the cytoplasm. The catalysed reaction is (S)-malate = fumarate + H2O. It functions in the pathway carbohydrate metabolism; tricarboxylic acid cycle; (S)-malate from fumarate: step 1/1. Involved in the TCA cycle. Catalyzes the stereospecific interconversion of fumarate to L-malate. The protein is Fumarate hydratase class II of Xylella fastidiosa (strain Temecula1 / ATCC 700964).